Reading from the N-terminus, the 85-residue chain is Large ribosomal subunit protein bL31B (85 aa).

Belongs to the bacterial ribosomal protein bL31 family. Type B subfamily. Part of the 50S ribosomal subunit.

This is Large ribosomal subunit protein bL31B from Vibrio cholerae serotype O1 (strain ATCC 39541 / Classical Ogawa 395 / O395).